The chain runs to 417 residues: MTLSPEKEHVRPRDAADNDPVAVARGLAEKWRATAVERDRAGGSATAEREDLRASALLSLLVPREYGGWGADWPTAIEVVREIAAADGSLGHLFGYHLTNAPMIELIGSQEQEEHLYTQIAQNNWWTGNASSENNSHELDVKVSATPTEDGGYVLNGTKHFCSGAKGSDLLFVFGVVQDDSPQQGAIIAAAIPTSRAGVTPNDDWAAIGMRQTDSGSTDFHNVKVEPDEVLGAPNAFVLAFIQSERGSLFRPIAQLIFANVYLGIAHGALDAAREYTRTQARPWTPAGIQQATEDPYTIRSYGEFTIALQGADAAAREAAHLVQTVWDKGDALTPEDRGELMAKVSGVKSLATNAALNISSGVFEVIGARGTHPRYGFDRFWRNVRTHSLHDPVSYKIADVGKHTLNGQYPIPGFTS.

Residues 19 to 125 are helical N-terminus; it reads DPVAVARGLA…LYTQIAQNNW (107 aa). Residues Y96, 129 to 134, 159 to 163, R282, 369 to 370, and H391 each bind FMN; these read NASSEN, KHFCS, and AR. The interval 126–234 is central beta-barrel N-terminus; that stretch reads WTGNASSENN…VEPDEVLGAP (109 aa). Residues 131 to 142 are lid loop; the sequence is SSENNSHELDVK. The segment at 235-409 is helical C-terminus; it reads NAFVLAFIQS…DVGKHTLNGQ (175 aa).

It belongs to the DszC flavin monooxygenase family. Homotetramer.

It is found in the cytoplasm. It catalyses the reaction dibenzothiophene + 2 FMNH2 + 2 O2 = dibenzothiophene 5,5-dioxide + 2 FMN + 2 H2O + 2 H(+). It carries out the reaction dibenzothiophene + FMNH2 + O2 = dibenzothiophene 5-oxide + FMN + H2O + H(+). The enzyme catalyses dibenzothiophene 5-oxide + FMNH2 + O2 = dibenzothiophene 5,5-dioxide + FMN + H2O + H(+). Its pathway is sulfur metabolism; dibenzothiophene degradation. Its function is as follows. Catalyzes the first step of the '4S' desulfurization pathway that removes covalently bound sulfur from dibenzothiophene (DBT) without breaking carbon-carbon bonds. Sulfur dioxygenase which converts DBT to DBT-sulfone (DBTO2 or DBT 5,5-dioxide) in a stepwise manner. This is Dibenzothiophene monooxygenase from Rhodococcus erythropolis (Arthrobacter picolinophilus).